A 459-amino-acid chain; its full sequence is Zinc finger chaperone zpr1 (459 aa).

2 consecutive C4-type zinc fingers follow at residues 38–70 (CMEC…CPHC) and 259–291 (CPSC…CDRC).

This sequence belongs to the ZPR1 family.

It is found in the cytoplasm. Its subcellular location is the nucleus. Its function is as follows. Acts as a protein folding chaperone for elongation factor 1-alpha. The chain is Zinc finger chaperone zpr1 from Schizosaccharomyces pombe (strain 972 / ATCC 24843) (Fission yeast).